The chain runs to 163 residues: MKKLTYRKIQSFQAIITVLVIFASFYLEYAAGLQPCPLCLMQRVCVFILLGLMGVSLGTVKKAHIVSLIQFQVACAGLYFSLRQLWLQSLPSDQAPACMPGLDVLIQYFPWQTVAKALFWGAGDCAEVTWTMFGVSMPGWAAMYFLSMAIMGLFLFFRTRTIN.

Over 1 to 9 (MKKLTYRKI) the chain is Cytoplasmic. The chain crosses the membrane as a helical span at residues 10-26 (QSFQAIITVLVIFASFY). The Periplasmic portion of the chain corresponds to 27–44 (LEYAAGLQPCPLCLMQRV). Cys-36 and Cys-39 form a disulfide bridge. Residues 45-58 (CVFILLGLMGVSLG) form a helical membrane-spanning segment. Topologically, residues 59–64 (TVKKAH) are cytoplasmic. Residues 65-82 (IVSLIQFQVACAGLYFSL) traverse the membrane as a helical segment. The Periplasmic portion of the chain corresponds to 83 to 139 (RQLWLQSLPSDQAPACMPGLDVLIQYFPWQTVAKALFWGAGDCAEVTWTMFGVSMPG). Cys-98 and Cys-125 form a disulfide bridge. Residues 140-158 (WAAMYFLSMAIMGLFLFFR) traverse the membrane as a helical segment. Over 159–163 (TRTIN) the chain is Cytoplasmic.

It belongs to the DsbB family.

It is found in the cell inner membrane. In terms of biological role, required for disulfide bond formation in some periplasmic proteins. Acts by oxidizing the DsbA protein. In Legionella pneumophila (strain Lens), this protein is Disulfide bond formation protein B.